Consider the following 488-residue polypeptide: Regulatory protein ViaA (488 aa).

Belongs to the ViaA family. As to quaternary structure, homodimer. Interacts with RavA.

It is found in the cytoplasm. In terms of biological role, component of the RavA-ViaA chaperone complex, which may act on the membrane to optimize the function of some of the respiratory chains. ViaA stimulates the ATPase activity of RavA. This Yersinia pseudotuberculosis serotype O:1b (strain IP 31758) protein is Regulatory protein ViaA.